We begin with the raw amino-acid sequence, 337 residues long: tRNA N6-adenosine threonylcarbamoyltransferase (337 aa).

Positions 107 and 111 each coordinate Fe cation. Residues 129-133, aspartate 162, glycine 175, and asparagine 271 contribute to the substrate site; that span reads LISGG. Residue aspartate 299 coordinates Fe cation.

The protein belongs to the KAE1 / TsaD family. Requires Fe(2+) as cofactor.

Its subcellular location is the cytoplasm. It catalyses the reaction L-threonylcarbamoyladenylate + adenosine(37) in tRNA = N(6)-L-threonylcarbamoyladenosine(37) in tRNA + AMP + H(+). Its function is as follows. Required for the formation of a threonylcarbamoyl group on adenosine at position 37 (t(6)A37) in tRNAs that read codons beginning with adenine. Is involved in the transfer of the threonylcarbamoyl moiety of threonylcarbamoyl-AMP (TC-AMP) to the N6 group of A37, together with TsaE and TsaB. TsaD likely plays a direct catalytic role in this reaction. The chain is tRNA N6-adenosine threonylcarbamoyltransferase from Sulfurovum sp. (strain NBC37-1).